The primary structure comprises 981 residues: MEFHLQKKATKTNATTISIEITKPVKNIKLEPGQFIEDIKLIYTHTNTIRKIGTTNYTIVTDNSNIDNFKGIENSSDDDDDDDDDDDYNNNNNNNNNNNNNNNNNNNNNNNNINSNKNINSNNSINNSLSNNSSNINNSSNNISYIGNSSNSINNNDNKLSRSRSRSRGSAKTTSSLTSSKRSLDSRNRNRDRSYTRSRSRSRSRSYSRGFSSLSRSRSRSRSISSRSRSRSRSRRSRSRSSRSRSRSRSKSKSKSRRSRSRSRSRRSRSRSDSRSRSDSRGRSRSRSDSRKNSKRQTKSRSRSESRLPDKNYSSKRHQNSRKRNRSYSRSRTRSWSRSRTRSRSRRRYGGRTFRSPRRSRDDSRDRGRDRERDRDRNRCRDRDRDRERERERRLRDRNRDRERDGYRERDRGRYRERGGERERNRNRDRDRERDRNRDRDRSQSPHNEKNKGFLSSSGNKIETKLKSPISNITKYSDMDIDNNINNIINSNNINNNNIKNSNNINNSNNNNNNNNNNNNNNNNNNNNNNNNNNNNNNNNNNNSHNNTNGNVNGVSKTTSSPASDNSTPENISTDLDSPLLKKNQQLNLIKEQTNKLKTEDSIDESNNNGNDRFKTKCSSTENENKNRENEKNNSENSKNNPNNNNPNNNNNNNNNNNNNNNNNNNNNNNNNNNNNNNNNNNNNNNNNNNNNNNNNNNSNNNNNPNNYNNNNPNNNPNNNNNNNNKNINKNNSNNSNNSNNSSNSRNNSNNSNNNNNNNNLNNNNPNNNNPNNNNPNNNNPNNNNPNNNNNNNNNNNNNNNNNNNNNNNNNKNNNNNNNSFSEEEEEEGSLNQVRNISPKIGKYNEDISFLEKEWNRLGNVQNDTNSSPISQQLSTSSSPFKSTGGSNDGNSSDIIMMESNNDIINDGGKKNRVFKESQVVQRESLDVSKFKKSKAIFFGEGWIYRNHRKEPCVSWRFNNNTPPPDPRLNRDYINLRYVYE.

Disordered regions lie at residues 65 to 133 (NIDN…SNNS), 149 to 463 (SSNS…NKIE), 491 to 580 (SNNI…DSPL), 592 to 834 (EQTN…LNQV), and 861 to 891 (VQND…NDGN). Over residues 75–88 (SSDDDDDDDDDDDY) the composition is skewed to acidic residues. Low complexity-rich tracts occupy residues 89-133 (NNNN…SNNS), 149-158 (SSNSINNNDN), and 170-181 (SAKTTSSLTSSK). A compositionally biased stretch (basic and acidic residues) spans 182–195 (RSLDSRNRNRDRSY). The span at 196-206 (TRSRSRSRSRS) shows a compositional bias: basic residues. The segment covering 207 to 227 (YSRGFSSLSRSRSRSRSISSR) has biased composition (low complexity). Positions 228–269 (SRSRSRSRRSRSRSSRSRSRSRSKSKSKSRRSRSRSRSRRSR) are enriched in basic residues. The span at 270-292 (SRSDSRSRSDSRGRSRSRSDSRK) shows a compositional bias: basic and acidic residues. Over residues 314–358 (SSKRHQNSRKRNRSYSRSRTRSWSRSRTRSRSRRRYGGRTFRSPR) the composition is skewed to basic residues. The segment covering 359-452 (RSRDDSRDRG…SQSPHNEKNK (94 aa)) has biased composition (basic and acidic residues). Positions 491–553 (SNNINNNNIK…SHNNTNGNVN (63 aa)) are enriched in low complexity. Polar residues-rich tracts occupy residues 554-576 (GVSK…STDL) and 605-622 (ESNN…SSTE). Residues 623–634 (NENKNRENEKNN) are compositionally biased toward basic and acidic residues. Composition is skewed to low complexity over residues 635-820 (SENS…NNNS) and 867-891 (SSPI…NDGN).

This is an uncharacterized protein from Dictyostelium discoideum (Social amoeba).